The primary structure comprises 396 residues: Digeranylgeranylglycerophospholipid reductase 2 (396 aa).

FAD-binding residues include Ala-13, Glu-32, Cys-43, Ala-44, Gly-46, Arg-92, Ala-116, Asp-278, Gly-290, and Leu-291.

The protein belongs to the geranylgeranyl reductase family. DGGGPL reductase subfamily. FAD is required as a cofactor.

The catalysed reaction is a 2,3-bis-O-phytanyl-sn-glycerol 1-phospholipid + 8 A = a 2,3-bis-O-(geranylgeranyl)-sn-glycerol 1-phospholipid + 8 AH2. It carries out the reaction 2,3-bis-O-(phytanyl)-sn-glycerol 1-phosphate + 8 A = 2,3-bis-O-(geranylgeranyl)-sn-glycerol 1-phosphate + 8 AH2. It catalyses the reaction CDP-2,3-bis-O-(geranylgeranyl)-sn-glycerol + 8 AH2 = CDP-2,3-bis-O-(phytanyl)-sn-glycerol + 8 A. The enzyme catalyses archaetidylserine + 8 AH2 = 2,3-bis-O-phytanyl-sn-glycero-3-phospho-L-serine + 8 A. The protein operates within membrane lipid metabolism; glycerophospholipid metabolism. Is involved in the reduction of 2,3-digeranylgeranylglycerophospholipids (unsaturated archaeols) into 2,3-diphytanylglycerophospholipids (saturated archaeols) in the biosynthesis of archaeal membrane lipids. Catalyzes the formation of archaetidic acid (2,3-di-O-phytanyl-sn-glyceryl phosphate) from 2,3-di-O-geranylgeranylglyceryl phosphate (DGGGP) via the hydrogenation of each double bond of the isoprenoid chains. Is also probably able to reduce double bonds of geranyl groups in CDP-2,3-bis-O-(geranylgeranyl)-sn-glycerol and archaetidylserine, thus acting at various stages in the biosynthesis of archaeal membrane lipids. The protein is Digeranylgeranylglycerophospholipid reductase 2 of Methanopyrus kandleri (strain AV19 / DSM 6324 / JCM 9639 / NBRC 100938).